A 282-amino-acid chain; its full sequence is tRNA (guanine-N(1)-)-methyltransferase (282 aa).

The disordered stretch occupies residues 77 to 114; it reads TGPAATVSDLESSAEHKRNLRPATTNGDAEPLGEKAGG. S-adenosyl-L-methionine contacts are provided by residues glycine 149 and 173–178; that span reads IGDYVL.

This sequence belongs to the RNA methyltransferase TrmD family. In terms of assembly, homodimer.

It is found in the cytoplasm. It catalyses the reaction guanosine(37) in tRNA + S-adenosyl-L-methionine = N(1)-methylguanosine(37) in tRNA + S-adenosyl-L-homocysteine + H(+). Specifically methylates guanosine-37 in various tRNAs. The protein is tRNA (guanine-N(1)-)-methyltransferase of Corynebacterium jeikeium (strain K411).